We begin with the raw amino-acid sequence, 162 residues long: 2-C-methyl-D-erythritol 2,4-cyclodiphosphate synthase (162 aa).

Residues aspartate 9 and histidine 11 each contribute to the a divalent metal cation site. 4-CDP-2-C-methyl-D-erythritol 2-phosphate is bound by residues aspartate 9–histidine 11 and histidine 37–serine 38. Histidine 45 serves as a coordination point for a divalent metal cation.

It belongs to the IspF family. As to quaternary structure, homotrimer. It depends on a divalent metal cation as a cofactor.

The enzyme catalyses 4-CDP-2-C-methyl-D-erythritol 2-phosphate = 2-C-methyl-D-erythritol 2,4-cyclic diphosphate + CMP. Its pathway is isoprenoid biosynthesis; isopentenyl diphosphate biosynthesis via DXP pathway; isopentenyl diphosphate from 1-deoxy-D-xylulose 5-phosphate: step 4/6. Its function is as follows. Involved in the biosynthesis of isopentenyl diphosphate (IPP) and dimethylallyl diphosphate (DMAPP), two major building blocks of isoprenoid compounds. Catalyzes the conversion of 4-diphosphocytidyl-2-C-methyl-D-erythritol 2-phosphate (CDP-ME2P) to 2-C-methyl-D-erythritol 2,4-cyclodiphosphate (ME-CPP) with a corresponding release of cytidine 5-monophosphate (CMP). In Petrotoga mobilis (strain DSM 10674 / SJ95), this protein is 2-C-methyl-D-erythritol 2,4-cyclodiphosphate synthase.